A 440-amino-acid polypeptide reads, in one-letter code: C4-dicarboxylate transport protein (440 aa).

8 helical membrane passes run 8–28 (LYLQ…LFPA), 40–60 (FIKL…VTGI), 74–94 (LKGL…GLVV), 147–167 (GDIL…AALK), 187–207 (IVGF…AFTV), 221–241 (LIAC…GLVL), 288–308 (VVGL…SIYL), and 354–374 (AATL…LLGV). The tract at residues 419–440 (EEVEPANEPEPPAVPAGAGLHG) is disordered.

Belongs to the dicarboxylate/amino acid:cation symporter (DAACS) (TC 2.A.23) family.

It is found in the cell inner membrane. Its function is as follows. Responsible for the transport of dicarboxylates such as succinate, fumarate, and malate from the periplasm across the membrane. This Anaeromyxobacter dehalogenans (strain 2CP-1 / ATCC BAA-258) protein is C4-dicarboxylate transport protein.